We begin with the raw amino-acid sequence, 320 residues long: ATP-dependent 6-phosphofructokinase (320 aa).

Gly12 contacts ATP. 22–26 (RGVVR) lines the ADP pocket. ATP is bound by residues 73–74 (RF) and 103–106 (GDGS). Asp104 is a binding site for Mg(2+). 126 to 128 (TID) is a binding site for substrate. Asp128 serves as the catalytic Proton acceptor. An ADP-binding site is contributed by Arg155. Residues Arg163 and 170 to 172 (MGR) each bind substrate. ADP is bound by residues 186–188 (GCE), Lys212, and 214–216 (KKH). Substrate-binding positions include Glu223, Arg244, and 250-253 (HIQR).

It belongs to the phosphofructokinase type A (PFKA) family. ATP-dependent PFK group I subfamily. Prokaryotic clade 'B1' sub-subfamily. Homotetramer. Mg(2+) is required as a cofactor.

It is found in the cytoplasm. It catalyses the reaction beta-D-fructose 6-phosphate + ATP = beta-D-fructose 1,6-bisphosphate + ADP + H(+). Its pathway is carbohydrate degradation; glycolysis; D-glyceraldehyde 3-phosphate and glycerone phosphate from D-glucose: step 3/4. Its activity is regulated as follows. Allosterically activated by ADP and other diphosphonucleosides, and allosterically inhibited by phosphoenolpyruvate. In terms of biological role, catalyzes the phosphorylation of D-fructose 6-phosphate to fructose 1,6-bisphosphate by ATP, the first committing step of glycolysis. The polypeptide is ATP-dependent 6-phosphofructokinase (Vibrio vulnificus (strain CMCP6)).